The sequence spans 491 residues: Ketol-acid reductoisomerase (NADP(+)) (491 aa).

The region spanning 15–208 is the KARI N-terminal Rossmann domain; sequence AQLGKCRFMA…GGHRAGVLES (194 aa). Residues 45 to 48, arginine 68, arginine 76, serine 78, and 108 to 110 each bind NADP(+); these read CGAQ and DKQ. Histidine 132 is an active-site residue. An NADP(+)-binding site is contributed by glycine 158. KARI C-terminal knotted domains are found at residues 209 to 344 and 345 to 484; these read SFVA…NAPQ and FEGK…MTDM. Mg(2+)-binding residues include aspartate 217, glutamate 221, glutamate 389, and glutamate 393. Substrate is bound at residue serine 414.

Belongs to the ketol-acid reductoisomerase family. The cofactor is Mg(2+).

The catalysed reaction is (2R)-2,3-dihydroxy-3-methylbutanoate + NADP(+) = (2S)-2-acetolactate + NADPH + H(+). The enzyme catalyses (2R,3R)-2,3-dihydroxy-3-methylpentanoate + NADP(+) = (S)-2-ethyl-2-hydroxy-3-oxobutanoate + NADPH + H(+). It functions in the pathway amino-acid biosynthesis; L-isoleucine biosynthesis; L-isoleucine from 2-oxobutanoate: step 2/4. It participates in amino-acid biosynthesis; L-valine biosynthesis; L-valine from pyruvate: step 2/4. Functionally, involved in the biosynthesis of branched-chain amino acids (BCAA). Catalyzes an alkyl-migration followed by a ketol-acid reduction of (S)-2-acetolactate (S2AL) to yield (R)-2,3-dihydroxy-isovalerate. In the isomerase reaction, S2AL is rearranged via a Mg-dependent methyl migration to produce 3-hydroxy-3-methyl-2-ketobutyrate (HMKB). In the reductase reaction, this 2-ketoacid undergoes a metal-dependent reduction by NADPH to yield (R)-2,3-dihydroxy-isovalerate. This Serratia proteamaculans (strain 568) protein is Ketol-acid reductoisomerase (NADP(+)).